A 405-amino-acid polypeptide reads, in one-letter code: S-adenosylmethionine synthase (405 aa).

Histidine 22 contacts ATP. A Mg(2+)-binding site is contributed by aspartate 24. Glutamate 50 serves as a coordination point for K(+). L-methionine contacts are provided by glutamate 63 and glutamine 107. Residues 107–117 are flexible loop; it reads QSPDIAQGVDR. Residues 184–186, 250–251, aspartate 259, 265–266, alanine 282, and lysine 286 each bind ATP; these read DGK, RF, and RK. Position 259 (aspartate 259) interacts with L-methionine. Position 290 (lysine 290) interacts with L-methionine.

It belongs to the AdoMet synthase family. As to quaternary structure, homotetramer; dimer of dimers. It depends on Mg(2+) as a cofactor. The cofactor is K(+).

The protein localises to the cytoplasm. The catalysed reaction is L-methionine + ATP + H2O = S-adenosyl-L-methionine + phosphate + diphosphate. The protein operates within amino-acid biosynthesis; S-adenosyl-L-methionine biosynthesis; S-adenosyl-L-methionine from L-methionine: step 1/1. In terms of biological role, catalyzes the formation of S-adenosylmethionine (AdoMet) from methionine and ATP. The overall synthetic reaction is composed of two sequential steps, AdoMet formation and the subsequent tripolyphosphate hydrolysis which occurs prior to release of AdoMet from the enzyme. This is S-adenosylmethionine synthase from Roseiflexus sp. (strain RS-1).